Here is a 732-residue protein sequence, read N- to C-terminus: Elongation factor 2 (732 aa).

A tr-type G domain is found at 19 to 228; sequence ELVRNIGIVA…TKITFKDIVE (210 aa). GTP-binding positions include 28-35, 94-98, and 148-151; these read AHIDHGKT, DTPGH, and NKID. His-598 carries the diphthamide modification.

The protein belongs to the TRAFAC class translation factor GTPase superfamily. Classic translation factor GTPase family. EF-G/EF-2 subfamily.

The protein resides in the cytoplasm. Its function is as follows. Catalyzes the GTP-dependent ribosomal translocation step during translation elongation. During this step, the ribosome changes from the pre-translocational (PRE) to the post-translocational (POST) state as the newly formed A-site-bound peptidyl-tRNA and P-site-bound deacylated tRNA move to the P and E sites, respectively. Catalyzes the coordinated movement of the two tRNA molecules, the mRNA and conformational changes in the ribosome. This Thermoplasma volcanium (strain ATCC 51530 / DSM 4299 / JCM 9571 / NBRC 15438 / GSS1) protein is Elongation factor 2.